A 291-amino-acid polypeptide reads, in one-letter code: 4-hydroxy-tetrahydrodipicolinate synthase (291 aa).

Thr44 provides a ligand contact to pyruvate. Tyr132 acts as the Proton donor/acceptor in catalysis. The Schiff-base intermediate with substrate role is filled by Lys160. A pyruvate-binding site is contributed by Ile202.

Belongs to the DapA family. In terms of assembly, homotetramer; dimer of dimers.

Its subcellular location is the cytoplasm. The enzyme catalyses L-aspartate 4-semialdehyde + pyruvate = (2S,4S)-4-hydroxy-2,3,4,5-tetrahydrodipicolinate + H2O + H(+). Its pathway is amino-acid biosynthesis; L-lysine biosynthesis via DAP pathway; (S)-tetrahydrodipicolinate from L-aspartate: step 3/4. Catalyzes the condensation of (S)-aspartate-beta-semialdehyde [(S)-ASA] and pyruvate to 4-hydroxy-tetrahydrodipicolinate (HTPA). In Rhizorhabdus wittichii (strain DSM 6014 / CCUG 31198 / JCM 15750 / NBRC 105917 / EY 4224 / RW1) (Sphingomonas wittichii), this protein is 4-hydroxy-tetrahydrodipicolinate synthase.